The primary structure comprises 802 residues: Protein SBE22 (802 aa).

Disordered regions lie at residues 207–230 (SSTI…RSNS) and 323–345 (SGDP…QRHN).

This sequence belongs to the SBE2 family.

The protein resides in the cytoplasm. Its subcellular location is the golgi apparatus. Functionally, with SBE2, is involved in cell wall integrity and polarity processes like bud growth. In Vanderwaltozyma polyspora (strain ATCC 22028 / DSM 70294 / BCRC 21397 / CBS 2163 / NBRC 10782 / NRRL Y-8283 / UCD 57-17) (Kluyveromyces polysporus), this protein is Protein SBE22 (SBE22).